Here is a 138-residue protein sequence, read N- to C-terminus: Large ribosomal subunit protein uL16c (138 aa).

Belongs to the universal ribosomal protein uL16 family. As to quaternary structure, part of the 50S ribosomal subunit.

Its subcellular location is the plastid. The protein localises to the chloroplast. The sequence is that of Large ribosomal subunit protein uL16c from Chaetosphaeridium globosum (Charophycean green alga).